Reading from the N-terminus, the 434-residue chain is Putative ankyrin repeat protein FPV023 (434 aa).

ANK repeat units lie at residues 33 to 62, 134 to 163, 167 to 197, 201 to 230, 236 to 265, 269 to 299, and 303 to 330; these read RLKI…DPVA, LTIS…DINF, IGNT…DINI, YGTT…DPNS, IGTK…DPNI, AGVT…DPNI, and NGTT…DINI.

The protein is Putative ankyrin repeat protein FPV023 of Fowlpox virus (strain NVSL) (FPV).